We begin with the raw amino-acid sequence, 123 residues long: Small ribosomal subunit protein uS12 (123 aa).

Position 89 is a 3-methylthioaspartic acid (D89). The segment at 104–123 (TQGVKDRRQRRSKYGAKRPK) is disordered. Basic residues predominate over residues 110–123 (RRQRRSKYGAKRPK).

Belongs to the universal ribosomal protein uS12 family. Part of the 30S ribosomal subunit. Contacts proteins S8 and S17. May interact with IF1 in the 30S initiation complex.

In terms of biological role, with S4 and S5 plays an important role in translational accuracy. Interacts with and stabilizes bases of the 16S rRNA that are involved in tRNA selection in the A site and with the mRNA backbone. Located at the interface of the 30S and 50S subunits, it traverses the body of the 30S subunit contacting proteins on the other side and probably holding the rRNA structure together. The combined cluster of proteins S8, S12 and S17 appears to hold together the shoulder and platform of the 30S subunit. This Parvibaculum lavamentivorans (strain DS-1 / DSM 13023 / NCIMB 13966) protein is Small ribosomal subunit protein uS12.